The following is a 346-amino-acid chain: Protein RecA (346 aa).

ATP is bound at residue 64 to 71 (GPESSGKT).

The protein belongs to the RecA family.

It is found in the cytoplasm. Can catalyze the hydrolysis of ATP in the presence of single-stranded DNA, the ATP-dependent uptake of single-stranded DNA by duplex DNA, and the ATP-dependent hybridization of homologous single-stranded DNAs. It interacts with LexA causing its activation and leading to its autocatalytic cleavage. This chain is Protein RecA, found in Bacillus pumilus (strain SAFR-032).